The primary structure comprises 559 residues: Dihydroxy-acid dehydratase (559 aa).

A Mg(2+)-binding site is contributed by Asp-80. Cys-121 contributes to the [2Fe-2S] cluster binding site. Positions 122 and 123 each coordinate Mg(2+). The residue at position 123 (Lys-123) is an N6-carboxylysine. Cys-194 contributes to the [2Fe-2S] cluster binding site. Glu-447 is a binding site for Mg(2+). Ser-473 acts as the Proton acceptor in catalysis.

The protein belongs to the IlvD/Edd family. Homodimer. [2Fe-2S] cluster is required as a cofactor. Mg(2+) serves as cofactor.

The enzyme catalyses (2R)-2,3-dihydroxy-3-methylbutanoate = 3-methyl-2-oxobutanoate + H2O. The catalysed reaction is (2R,3R)-2,3-dihydroxy-3-methylpentanoate = (S)-3-methyl-2-oxopentanoate + H2O. Its pathway is amino-acid biosynthesis; L-isoleucine biosynthesis; L-isoleucine from 2-oxobutanoate: step 3/4. The protein operates within amino-acid biosynthesis; L-valine biosynthesis; L-valine from pyruvate: step 3/4. Functions in the biosynthesis of branched-chain amino acids. Catalyzes the dehydration of (2R,3R)-2,3-dihydroxy-3-methylpentanoate (2,3-dihydroxy-3-methylvalerate) into 2-oxo-3-methylpentanoate (2-oxo-3-methylvalerate) and of (2R)-2,3-dihydroxy-3-methylbutanoate (2,3-dihydroxyisovalerate) into 2-oxo-3-methylbutanoate (2-oxoisovalerate), the penultimate precursor to L-isoleucine and L-valine, respectively. This is Dihydroxy-acid dehydratase from Chlorobium chlorochromatii (strain CaD3).